The chain runs to 208 residues: 3-demethoxyubiquinol 3-hydroxylase (208 aa).

Residues E57, E87, H90, E139, E171, and H174 each contribute to the Fe cation site.

It belongs to the COQ7 family. Fe cation is required as a cofactor.

The protein resides in the cell membrane. It carries out the reaction a 5-methoxy-2-methyl-3-(all-trans-polyprenyl)benzene-1,4-diol + AH2 + O2 = a 3-demethylubiquinol + A + H2O. Its pathway is cofactor biosynthesis; ubiquinone biosynthesis. Functionally, catalyzes the hydroxylation of 2-nonaprenyl-3-methyl-6-methoxy-1,4-benzoquinol during ubiquinone biosynthesis. In Herbaspirillum seropedicae, this protein is 3-demethoxyubiquinol 3-hydroxylase.